Consider the following 340-residue polypeptide: Sulfotransferase ppzF (340 aa).

It participates in secondary metabolite biosynthesis. In terms of biological role, sulfotransferase; part of the gene cluster that mediates the biosynthesis of pyrrolopyrazines, secondary metabolites showing insecticidal activity. The role of ppzF within the pathway has still to be determined. The single multifunctional NRPS ppzA is sufficient to produce peramine via condensation of 1-pyrroline-5-carboxylate and arginine, N-methylation of the alpha-amino group of arginine and reduction of the thioester and the cyclization to form an iminium ion resulting in release from the peptide synthetase. Deprotonation of this intermediate and oxidation of the pyrroline ring would give rise to peramine. In Epichloe species that produce only peramine, the peramine synthetase gene is not localized in a gene cluster, in contrast to Metarhizium species that contain additional pyrrolopyrazine biosynthesis genes. The 2-oxoglutarate-Fe(II) type oxidoreductase ppzC hydroxylates peramine to yield the newly identified compound 8-hydroxyperamine whereas ppzD converts L-proline into trans-4-hydroxy-L-proline, a precursor of peramine biosynthesis. The chain is Sulfotransferase ppzF from Metarhizium majus (strain ARSEF 297).